The sequence spans 395 residues: Chalcone synthase (395 aa).

Cys-164 is a catalytic residue.

The protein belongs to the thiolase-like superfamily. Chalcone/stilbene synthases family.

The enzyme catalyses (E)-4-coumaroyl-CoA + 3 malonyl-CoA + 3 H(+) = 2',4,4',6'-tetrahydroxychalcone + 3 CO2 + 4 CoA. It participates in secondary metabolite biosynthesis; flavonoid biosynthesis. Functionally, the primary product of this enzyme is 4,2',4',6'-tetrahydroxychalcone (also termed naringenin-chalcone or chalcone) which can under specific conditions spontaneously isomerize into naringenin. This chain is Chalcone synthase (CHS), found in Betula pendula (European white birch).